Here is a 423-residue protein sequence, read N- to C-terminus: MAVEYECCGTSFFIHIAVIVLLVLFAGLMSGLTLGLMSMSLVDLEVLAKSGTPRDRIHAAKILPVVKNQHLLLCTLLICNAAAMEALPIFLDALVTAWGAILISVTLILLFGEIIPQSVCSRHGLAIGATVAPFVRVLVWICLPVAWPISKLLDFLLGHGRVALFRRAELKTLVDLHGNEAGKGGELTHDETTIIAGALELSEKMAKDAMTPISDTFVIDINAKLDRDLMNLILDKGHSRVPVYYEQRTNIIGLVLVKNLLTINPDEEIQVKNVTIRRIPRVPETLPLYDILNEFQKGHSHMAVVVRQCDKIHPLQSNDAANETVNEVRVDVDYERSPQETKLKRRRSLQKWKSFPNRANSLGSRSKRWSKDNDADILQLNEHPLPKLDEEEDAVGIITMEDVIEELLQEEIFDETDHHFEDL.

At 1 to 11 (MAVEYECCGTS) the chain is on the extracellular side. The 184-residue stretch at 8 to 191 (CGTSFFIHIA…GKGGELTHDE (184 aa)) folds into the CNNM transmembrane domain. The chain crosses the membrane as a helical span at residues 12-32 (FFIHIAVIVLLVLFAGLMSGL). The Cytoplasmic segment spans residues 33 to 70 (TLGLMSMSLVDLEVLAKSGTPRDRIHAAKILPVVKNQH). The helical transmembrane segment at 71 to 91 (LLLCTLLICNAAAMEALPIFL) threads the bilayer. Over 92–94 (DAL) the chain is Extracellular. A helical membrane pass occupies residues 95–115 (VTAWGAILISVTLILLFGEII). At 116–136 (PQSVCSRHGLAIGATVAPFVR) the chain is on the cytoplasmic side. The helical transmembrane segment at 137-157 (VLVWICLPVAWPISKLLDFLL) threads the bilayer. Topologically, residues 158 to 423 (GHGRVALFRR…DETDHHFEDL (266 aa)) are extracellular. The region spanning 210 to 271 (MTPISDTFVI…TINPDEEIQV (62 aa)) is the CBS 1 domain. Residues N273 and N322 are each glycosylated (N-linked (GlcNAc...) asparagine). 2 CBS domains span residues 275-332 (TIRR…RVDV) and 356-415 (PNRA…IFDE).

The protein localises to the membrane. In Arabidopsis thaliana (Mouse-ear cress), this protein is DUF21 domain-containing protein At2g14520 (CBSDUF3).